A 217-amino-acid polypeptide reads, in one-letter code: Guanylate kinase (217 aa).

A Guanylate kinase-like domain is found at 10–190 (GLLIILSSPS…TEEALKTIIT (181 aa)). 17-24 (SPSGAGKS) provides a ligand contact to ATP.

It belongs to the guanylate kinase family.

The protein localises to the cytoplasm. It carries out the reaction GMP + ATP = GDP + ADP. Essential for recycling GMP and indirectly, cGMP. The polypeptide is Guanylate kinase (Ruegeria sp. (strain TM1040) (Silicibacter sp.)).